The primary structure comprises 206 residues: Peptidyl-tRNA hydrolase (206 aa).

Y19 is a tRNA binding site. The active-site Proton acceptor is the H24. TRNA-binding residues include Y70, N72, and N118.

It belongs to the PTH family. As to quaternary structure, monomer.

It is found in the cytoplasm. It carries out the reaction an N-acyl-L-alpha-aminoacyl-tRNA + H2O = an N-acyl-L-amino acid + a tRNA + H(+). Its function is as follows. Hydrolyzes ribosome-free peptidyl-tRNAs (with 1 or more amino acids incorporated), which drop off the ribosome during protein synthesis, or as a result of ribosome stalling. In terms of biological role, catalyzes the release of premature peptidyl moieties from peptidyl-tRNA molecules trapped in stalled 50S ribosomal subunits, and thus maintains levels of free tRNAs and 50S ribosomes. This chain is Peptidyl-tRNA hydrolase, found in Prochlorococcus marinus (strain MIT 9303).